Here is a 104-residue protein sequence, read N- to C-terminus: Small ribosomal subunit protein uS10 (104 aa).

Belongs to the universal ribosomal protein uS10 family. In terms of assembly, part of the 30S ribosomal subunit.

Functionally, involved in the binding of tRNA to the ribosomes. This is Small ribosomal subunit protein uS10 from Albidiferax ferrireducens (strain ATCC BAA-621 / DSM 15236 / T118) (Rhodoferax ferrireducens).